A 344-amino-acid polypeptide reads, in one-letter code: Fructose-1,6-bisphosphatase class 1 (344 aa).

Mg(2+) is bound by residues Glu92, Asp115, Leu117, and Asp118. Residues Asp118–Ser121, Asn211, Tyr244, and Lys274 each bind substrate. Position 280 (Glu280) interacts with Mg(2+).

The protein belongs to the FBPase class 1 family. As to quaternary structure, homotetramer. Mg(2+) is required as a cofactor.

The protein resides in the cytoplasm. The catalysed reaction is beta-D-fructose 1,6-bisphosphate + H2O = beta-D-fructose 6-phosphate + phosphate. It participates in carbohydrate biosynthesis; gluconeogenesis. The polypeptide is Fructose-1,6-bisphosphatase class 1 (Aeromonas hydrophila subsp. hydrophila (strain ATCC 7966 / DSM 30187 / BCRC 13018 / CCUG 14551 / JCM 1027 / KCTC 2358 / NCIMB 9240 / NCTC 8049)).